The sequence spans 546 residues: Fusion glycoprotein F0 (546 aa).

The N-terminal stretch at 1-19 (MGILFAALLAMTNPHLATG) is a signal peptide. Over 20 to 491 (QIHWGNLSKI…NIKGVSVTNT (472 aa)) the chain is Extracellular. N-linked (GlcNAc...) asparagine; by host glycans are attached at residues Asn25, Asn57, and Asn63. The segment at 109-133 (FAGVVLAGAALGVATAAQITAGIAL) is fusion peptide. Positions 134 to 162 (HQSMMNSQAIESLKASLETTNQAIEEIRQ) form a coiled coil. Cystine bridges form between Cys330–Cys339, Cys354–Cys362, Cys386–Cys391, and Cys393–Cys416. Positions 458–483 (NLWNAVTKLEKAKDLLDSSDLILENI) form a coiled coil. The helical transmembrane segment at 492–512 (GYILVGVGLIAVVGILIITCC) threads the bilayer. Over 513-546 (CKKRRTDNKVSTMVLNPGLRPDLTGTSKSYVRSL) the chain is Cytoplasmic.

It belongs to the paramyxoviruses fusion glycoprotein family. As to quaternary structure, homotrimer of disulfide-linked F1-F2. In terms of processing, the inactive precursor F0 is glycosylated and proteolytically cleaved into F1 and F2 to be functionally active. The cleavage is mediated by cellular proteases during the transport and maturation of the polypeptide.

It localises to the virion membrane. The protein resides in the host cell membrane. Its function is as follows. Class I viral fusion protein. Under the current model, the protein has at least 3 conformational states: pre-fusion native state, pre-hairpin intermediate state, and post-fusion hairpin state. During viral and plasma cell membrane fusion, the heptad repeat (HR) regions assume a trimer-of-hairpins structure, positioning the fusion peptide in close proximity to the C-terminal region of the ectodomain. The formation of this structure appears to drive apposition and subsequent fusion of viral and plasma cell membranes. Directs fusion of viral and cellular membranes leading to delivery of the nucleocapsid into the cytoplasm. This fusion is pH independent and occurs directly at the outer cell membrane. The trimer of F1-F2 (F protein) probably interacts with HN at the virion surface. Upon HN binding to its cellular receptor, the hydrophobic fusion peptide is unmasked and interacts with the cellular membrane, inducing the fusion between cell and virion membranes. Later in infection, F proteins expressed at the plasma membrane of infected cells could mediate fusion with adjacent cells to form syncytia, a cytopathic effect that could lead to tissue necrosis. The protein is Fusion glycoprotein F0 (F) of Bos indicus (Zebu).